The following is a 111-amino-acid chain: Ciprofloxacin tolerance protein (111 aa).

At 1 to 5 the chain is on the periplasmic side; that stretch reads MVTAN. Residues 6-26 traverse the membrane as a helical segment; that stretch reads FAAIAGLSLIAVALVAVFFSP. At 27–30 the chain is on the cytoplasmic side; the sequence is YRRW. Residues 31-51 form a helical membrane-spanning segment; that stretch reads LGFMLAGMFFWGLLEVVRFGV. The Periplasmic segment spans residues 52 to 58; sequence QVTFEMP. The chain crosses the membrane as a helical span at residues 59–79; it reads VTYSYLTALSLAMVMVTFVLL. The Cytoplasmic segment spans residues 80-111; sequence REDKQAQKALANRQYIEHTPVYEDDQQQCSSR.

The protein localises to the cell inner membrane. In terms of biological role, may play a role in cellular filamentation, especially in response to ciprofloxacin. Increased expression confers tolerance to the antibiotic ciprofloxacin. The protein is Ciprofloxacin tolerance protein of Acinetobacter baumannii.